We begin with the raw amino-acid sequence, 714 residues long: Calpain-1 catalytic subunit (714 aa).

The Calpain catalytic domain occupies 55–354 (LFRDEAFPPV…FTRLEICNLT (300 aa)). Positions 109 and 114 each coordinate Ca(2+). Active-site residues include Cys115, His272, and Asn296. Residues Asp318 and Asp323 each contribute to the Ca(2+) site. Thr354 is subject to Phosphothreonine. Residues 355–526 (PDALKSQRVR…KKAGTQELDD (172 aa)) form a domain III region. Residues 527 to 542 (QVQAILPDEQVLSEEE) are linker. The domain IV stretch occupies residues 543-713 (IDENFKALFR…LFKWLQLTMF (171 aa)). 3 EF-hand domains span residues 585–618 (FSLESCRSMVNLMDRDGNGKLGLVEFNILWNRIR), 615–650 (NRIRNYLSIFRKFDLDKSGSMSAYEMRMAIESAGFK), and 680–714 (VRLETMFRFFKTLDTDLDGVVTFDLFKWLQLTMFA). Ca(2+)-binding residues include Asp598, Asp600, Asn602, Lys604, Glu609, Asp628, Asp630, Ser632, Ser634, and Glu639.

It belongs to the peptidase C2 family. Forms a heterodimer with a small (regulatory) subunit CAPNS1. Ca(2+) is required as a cofactor. Undergoes calcium-induced successive autoproteolytic cleavages that generate a membrane-bound 78 kDa active form and an intracellular 75 kDa active form. Calpastatin reduces with high efficiency the transition from 78 kDa to 75 kDa calpain forms.

It is found in the cytoplasm. Its subcellular location is the cell membrane. The enzyme catalyses Broad endopeptidase specificity.. With respect to regulation, activated by micromolar concentrations of calcium and inhibited by calpastatin. Functionally, calcium-regulated non-lysosomal thiol-protease which catalyzes limited proteolysis of substrates involved in cytoskeletal remodeling and signal transduction. Proteolytically cleaves CTBP1. Cleaves and activates caspase-7 (CASP7). The sequence is that of Calpain-1 catalytic subunit from Sus scrofa (Pig).